The chain runs to 489 residues: 3-octaprenyl-4-hydroxybenzoate carboxy-lyase (489 aa).

Asparagine 172 lines the Mn(2+) pocket. Residues 175 to 177 (IYR), 189 to 191 (RWL), and 194 to 195 (RG) each bind prenylated FMN. Glutamate 238 contacts Mn(2+). Aspartate 287 acts as the Proton donor in catalysis.

The protein belongs to the UbiD family. Homohexamer. Requires prenylated FMN as cofactor. It depends on Mn(2+) as a cofactor.

The protein resides in the cell membrane. It carries out the reaction a 4-hydroxy-3-(all-trans-polyprenyl)benzoate + H(+) = a 2-(all-trans-polyprenyl)phenol + CO2. Its pathway is cofactor biosynthesis; ubiquinone biosynthesis. Catalyzes the decarboxylation of 3-octaprenyl-4-hydroxy benzoate to 2-octaprenylphenol, an intermediate step in ubiquinone biosynthesis. The sequence is that of 3-octaprenyl-4-hydroxybenzoate carboxy-lyase from Psychromonas ingrahamii (strain DSM 17664 / CCUG 51855 / 37).